Reading from the N-terminus, the 32-residue chain is uncharacterized protein (32 aa).

This is an uncharacterized protein from Haloarcula hispanica (His1V).